A 245-amino-acid chain; its full sequence is Protein canopy homolog 4 (245 aa).

The N-terminal stretch at 1–27 is a signal peptide; that stretch reads MCGLRFIMGPVRLEILLFILAAYGAWA. Intrachain disulfides connect C44/C202, C47/C190, and C100/C162. The segment at 207–245 is disordered; the sequence is WTGKEKISDGQEEADDEEEEEEEEITKTSGNPKHDPEDL. A coiled-coil region spans residues 209–237; the sequence is GKEKISDGQEEADDEEEEEEEEITKTSGN. Positions 216-230 are enriched in acidic residues; the sequence is GQEEADDEEEEEEEE.

Belongs to the canopy family. As to quaternary structure, interacts with TLR4. Highly expressed in lung, spleen, thymus, and uterus. Moderately expressed in kidney, stomach and placenta. Weakly expressed in brain, heart, liver, small intestine, skeletal muscle and testis.

It localises to the secreted. Functionally, plays a role in the regulation of the cell surface expression of TLR4. This chain is Protein canopy homolog 4 (Cnpy4), found in Mus musculus (Mouse).